Reading from the N-terminus, the 533-residue chain is Glycoprotein (533 aa).

Residues 1–19 form the signal peptide; sequence MPLNAVIFTLLLRCSICLG. The Virion surface segment spans residues 20–459; the sequence is KFPFYTIPDK…DLGLPEWKRY (440 aa). Residues 460 to 480 form a helical membrane-spanning segment; sequence FLIGVSAVALLALSIIIAVCC. Residue C480 is the site of S-palmitoyl cysteine; by host attachment. At 481–533 the chain is on the intravirion side; sequence KRFRKRKKSKPGPVELTRKVSVISKGNGPVPSWESYKEGTTGDVRNTTPSTRE. The tract at residues 492–533 is disordered; it reads GPVELTRKVSVISKGNGPVPSWESYKEGTTGDVRNTTPSTRE. The span at 523 to 533 shows a compositional bias: polar residues; sequence DVRNTTPSTRE.

It belongs to the lyssavirus glycoprotein family. Homotrimer. Interacts with matrix protein. Post-translationally, glycosylated and palmitoylated by host. Glycosylation is crucial for glycoprotein export at the cell surface.

Its subcellular location is the virion membrane. Its function is as follows. Attaches the virus to host cellular receptor, inducing endocytosis of the virion. In the endosome, the acidic pH induces conformational changes in the glycoprotein trimer, which trigger fusion between virus and cell membrane. The protein is Glycoprotein (G) of Duvenhage virus (DUVV).